Here is a 407-residue protein sequence, read N- to C-terminus: Na(+)-translocating NADH-quinone reductase subunit F (407 aa).

The chain crosses the membrane as a helical span at residues 3 to 23 (IILGVVMFTLIVLALTVMILF). In terms of domain architecture, 2Fe-2S ferredoxin-type spans 32-126 (GDITVEINED…NLKIELPEEI (95 aa)). [2Fe-2S] cluster-binding residues include C69, C75, C78, and C110. An FAD-binding FR-type domain is found at 129 to 269 (VKKWTCEVIS…SGPFGEFFAK (141 aa)).

The protein belongs to the NqrF family. Composed of six subunits; NqrA, NqrB, NqrC, NqrD, NqrE and NqrF. Requires [2Fe-2S] cluster as cofactor. The cofactor is FAD.

Its subcellular location is the cell inner membrane. The enzyme catalyses a ubiquinone + n Na(+)(in) + NADH + H(+) = a ubiquinol + n Na(+)(out) + NAD(+). Functionally, NQR complex catalyzes the reduction of ubiquinone-1 to ubiquinol by two successive reactions, coupled with the transport of Na(+) ions from the cytoplasm to the periplasm. The first step is catalyzed by NqrF, which accepts electrons from NADH and reduces ubiquinone-1 to ubisemiquinone by a one-electron transfer pathway. The chain is Na(+)-translocating NADH-quinone reductase subunit F from Yersinia pseudotuberculosis serotype I (strain IP32953).